The sequence spans 515 residues: Putative pumilio homolog 8, chloroplastic (515 aa).

The interval 1-33 (MMRGEFGEASSLSRSPSSPLQTEPHPQSPKFYR) is disordered. The transit peptide at 1-70 (MMRGEFGEAS…LSSYFSNGLC (70 aa)) directs the protein to the chloroplast. Residues 10–20 (SSLSRSPSSPL) are compositionally biased toward low complexity. In terms of domain architecture, PUM-HD spans 174-515 (SGVGALFDHQ…RIFSRNLLKN (342 aa)). Pumilio repeat units lie at residues 198 to 233 (EFQG…VIFS), 234 to 269 (EVIP…QIIL), 270 to 308 (MVTS…SLVK), 310 to 345 (ALRP…FIFE), 346 to 381 (DATK…KLVT), 382 to 417 (EISR…AMLA), 418 to 456 (QLKG…ELIS), and 457 to 490 (VPHF…TLVE).

It localises to the plastid. It is found in the chloroplast. The protein localises to the cytoplasm. Sequence-specific RNA-binding protein that regulates translation and mRNA stability by binding the 3'-UTR of target mRNAs. This chain is Putative pumilio homolog 8, chloroplastic (APUM8), found in Arabidopsis thaliana (Mouse-ear cress).